Here is a 121-residue protein sequence, read N- to C-terminus: MKTSTNKPNEEVRAFAKNIRMSAHKVRRVMDQIRGRPYAQAYILLKFLPYKACYPIFQLLNSAAANAKNNMSFKKELFVSRAEVNEATSSKRFHFRAKGRSFCIRKQTCHITIVLKQLPEQ.

The protein belongs to the universal ribosomal protein uL22 family. In terms of assembly, part of the 50S ribosomal subunit.

It localises to the plastid. Its subcellular location is the chloroplast. Its function is as follows. This protein binds specifically to 23S rRNA. The globular domain of the protein is located near the polypeptide exit tunnel on the outside of the subunit, while an extended beta-hairpin is found that lines the wall of the exit tunnel in the center of the 70S ribosome. The polypeptide is Large ribosomal subunit protein uL22c (rpl22) (Welwitschia mirabilis (Tree tumbo)).